We begin with the raw amino-acid sequence, 232 residues long: MAKNDIWTPLESNPDSLYLYSCKLGQSKLKFVDIYGFNNDLLDMIPQPVQAVIFLYPVNDNIVSENNTNDKHNLKENFDNVWFIKQYIPNSCGTIALLHLYGNLRNKFELDKDSVLDDFFNKVNEMSAEKRGQELKNNKSIENLHHEFCGQVENRDDILDVDTHFIVFVQIEGKIIELDGRKDHPTVHCFTNGDNFLYDTGKIIQDKFIEKCKDDLRFSALAVIPNDNFDII.

Positions 6–225 (IWTPLESNPD…LRFSALAVIP (220 aa)) constitute a UCH catalytic domain. The segment at 10 to 14 (LESNP) is interaction with ubiquitin. The active-site Nucleophile is C92. The interval 151–159 (QVENRDDIL) is crossover loop which restricts access of large ubiquitin adducts to the active site. The interaction with ubiquitin stretch occupies residues 163–165 (THF). The Proton donor role is filled by H164.

Belongs to the peptidase C12 family.

It catalyses the reaction Thiol-dependent hydrolysis of ester, thioester, amide, peptide and isopeptide bonds formed by the C-terminal Gly of ubiquitin (a 76-residue protein attached to proteins as an intracellular targeting signal).. Functionally, thiol protease that recognizes and hydrolyzes a peptide bond at the C-terminal glycine of either ubiquitin or NEDD8. Essential for parasite blood stage survival. This Plasmodium falciparum (isolate 3D7) protein is Ubiquitin carboxyl-terminal hydrolase UCHL3.